The following is a 139-amino-acid chain: Autophagy-related protein 31 (139 aa).

Belongs to the ATG31 family. As to quaternary structure, forms a stable complex with ATG17 and ATG29. Interacts directly with ATG29. The ATG17-ATG29-ATG31 complex interacts with the ATG1-ATG13 complex. Note=The interaction with the ATG1-ATG13 complex is induced by starvation.

The protein resides in the preautophagosomal structure. Its function is as follows. Plays a role in starvation-induced autophagy. Involved in mitophagy. Functions with ATG17 and ATG29 at the preautophagosomal structure (PAS) in order to form normal autophagosomes under starvation conditions. The polypeptide is Autophagy-related protein 31 (Kluyveromyces marxianus (strain DMKU3-1042 / BCC 29191 / NBRC 104275) (Yeast)).